The primary structure comprises 49 residues: Heme exporter protein C (49 aa).

Belongs to the CcmC/CycZ/HelC family.

The protein resides in the cell inner membrane. Functionally, required for the export of heme to the periplasm for the biogenesis of c-type cytochromes. The polypeptide is Heme exporter protein C (Rhizobium leguminosarum bv. viciae).